The following is a 223-amino-acid chain: Ubiquinone biosynthesis protein COQ4 homolog 2, mitochondrial (223 aa).

Residues Met-1–Asn-26 constitute a mitochondrion transit peptide. Positions Thr-21–Thr-32 are enriched in low complexity. The interval Thr-21–Pro-43 is disordered. Zn(2+)-binding residues include His-177, Asp-178, His-181, and Glu-193.

This sequence belongs to the COQ4 family. As to quaternary structure, component of a multi-subunit COQ enzyme complex. It depends on Zn(2+) as a cofactor.

It is found in the mitochondrion inner membrane. It carries out the reaction a 4-hydroxy-3-methoxy-5-(all-trans-polyprenyl)benzoate + H(+) = a 2-methoxy-6-(all-trans-polyprenyl)phenol + CO2. The protein operates within cofactor biosynthesis; ubiquinone biosynthesis. Lyase that catalyzes the C1-decarboxylation of 4-hydroxy-3-methoxy-5-(all-trans-polyprenyl)benzoic acid into 2-methoxy-6-(all-trans-polyprenyl)phenol during ubiquinone biosynthesis. The sequence is that of Ubiquinone biosynthesis protein COQ4 homolog 2, mitochondrial from Culex quinquefasciatus (Southern house mosquito).